We begin with the raw amino-acid sequence, 405 residues long: Putative colanic acid biosynthesis glycosyl transferase WcaC (405 aa).

Its pathway is slime biogenesis; slime polysaccharide biosynthesis. In Escherichia coli (strain K12), this protein is Putative colanic acid biosynthesis glycosyl transferase WcaC (wcaC).